Reading from the N-terminus, the 75-residue chain is Putative UPF0377 protein YJL222W-A (75 aa).

Belongs to the UPF0377 family.

The sequence is that of Putative UPF0377 protein YJL222W-A from Saccharomyces cerevisiae (strain ATCC 204508 / S288c) (Baker's yeast).